A 271-amino-acid polypeptide reads, in one-letter code: Phosphonoacetaldehyde hydrolase (271 aa).

The active-site Nucleophile is D12. Positions 12 and 14 each coordinate Mg(2+). K54 functions as the Schiff-base intermediate with substrate in the catalytic mechanism. Residue D188 participates in Mg(2+) binding.

The protein belongs to the HAD-like hydrolase superfamily. PhnX family. As to quaternary structure, homodimer. It depends on Mg(2+) as a cofactor.

The catalysed reaction is phosphonoacetaldehyde + H2O = acetaldehyde + phosphate + H(+). Functionally, involved in phosphonate degradation. The polypeptide is Phosphonoacetaldehyde hydrolase (Vibrio cholerae serotype O1 (strain ATCC 39541 / Classical Ogawa 395 / O395)).